Consider the following 296-residue polypeptide: uncharacterized protein (296 aa).

A signal peptide spans 1 to 20 (MRKFIFVLLTLLLVSPFSFA).

This is an uncharacterized protein from Escherichia coli (strain K12).